Reading from the N-terminus, the 207-residue chain is Outer-membrane lipoprotein LolB (207 aa).

Residues 1 to 21 (MTLPDFRLIRLLPLASLVLTA) form the signal peptide. C22 carries the N-palmitoyl cysteine lipid modification. A lipid anchor (S-diacylglycerol cysteine) is attached at C22.

It belongs to the LolB family. In terms of assembly, monomer.

It is found in the cell outer membrane. Its function is as follows. Plays a critical role in the incorporation of lipoproteins in the outer membrane after they are released by the LolA protein. In Salmonella agona (strain SL483), this protein is Outer-membrane lipoprotein LolB.